The sequence spans 230 residues: Enolase-phosphatase E1 (230 aa).

The protein belongs to the HAD-like hydrolase superfamily. MasA/MtnC family. In terms of assembly, monomer. Mg(2+) serves as cofactor.

The catalysed reaction is 5-methylsulfanyl-2,3-dioxopentyl phosphate + H2O = 1,2-dihydroxy-5-(methylsulfanyl)pent-1-en-3-one + phosphate. It functions in the pathway amino-acid biosynthesis; L-methionine biosynthesis via salvage pathway; L-methionine from S-methyl-5-thio-alpha-D-ribose 1-phosphate: step 3/6. The protein operates within amino-acid biosynthesis; L-methionine biosynthesis via salvage pathway; L-methionine from S-methyl-5-thio-alpha-D-ribose 1-phosphate: step 4/6. Functionally, bifunctional enzyme that catalyzes the enolization of 2,3-diketo-5-methylthiopentyl-1-phosphate (DK-MTP-1-P) into the intermediate 2-hydroxy-3-keto-5-methylthiopentenyl-1-phosphate (HK-MTPenyl-1-P), which is then dephosphorylated to form the acireductone 1,2-dihydroxy-3-keto-5-methylthiopentene (DHK-MTPene). The sequence is that of Enolase-phosphatase E1 from Sulfurihydrogenibium sp. (strain YO3AOP1).